A 259-amino-acid chain; its full sequence is Thiazole synthase (259 aa).

Catalysis depends on Lys-98, which acts as the Schiff-base intermediate with DXP. Residues Gly-159, Ala-185–Gly-186, and Asn-207–Ser-208 each bind 1-deoxy-D-xylulose 5-phosphate.

This sequence belongs to the ThiG family. In terms of assembly, homotetramer. Forms heterodimers with either ThiH or ThiS.

The protein resides in the cytoplasm. It carries out the reaction [ThiS sulfur-carrier protein]-C-terminal-Gly-aminoethanethioate + 2-iminoacetate + 1-deoxy-D-xylulose 5-phosphate = [ThiS sulfur-carrier protein]-C-terminal Gly-Gly + 2-[(2R,5Z)-2-carboxy-4-methylthiazol-5(2H)-ylidene]ethyl phosphate + 2 H2O + H(+). The protein operates within cofactor biosynthesis; thiamine diphosphate biosynthesis. Catalyzes the rearrangement of 1-deoxy-D-xylulose 5-phosphate (DXP) to produce the thiazole phosphate moiety of thiamine. Sulfur is provided by the thiocarboxylate moiety of the carrier protein ThiS. In vitro, sulfur can be provided by H(2)S. The chain is Thiazole synthase from Chlorobaculum tepidum (strain ATCC 49652 / DSM 12025 / NBRC 103806 / TLS) (Chlorobium tepidum).